A 969-amino-acid chain; its full sequence is MMDFLKRFFGSSQERILKRFQKLVEEVNACDEKFSSLSDDELRKKTPQLKQRYQDGESLDKLLPEAYGVVKNVCRRLAGTPVEVSGYHQQWDMVPYDVQILGAIAMHKGFITEMQTGEGKTLTAVMPLYLNALTGKPVHLVTVNDYLAQRDCEWVGSVLRWLGLTTGVLVSGSPPEKRKAIYQCDVVYGTASEFGFDYLRDNSIATRKEEQVGRGFYFAIIDEIDSVLIDEARTPLIISGPGEKHNPVYFELKDRVAELVYFQREMCNHIAIEARKVLDPFLGTDVLPKDKKVMEAISEACRALWLVSKGMPLNRVLRRVREHPDLRAMIDKWDVFYHAEQNKEQCLEKLSSLYIVVDEHNNDFELTDKGMLQWIEKIGGAAEDFVMMDMGHEYALIEEDATLSPADKLNRKIAVSEKDTQRKARAHGLRQLLRAHLLMEKDIDYIVRDDQIVIIDEHTGRPQSGRRFSEGLHQAIEAKEHVTIRKESQTFATVTLQNFFRLYEKLAGMTGTAITESREFKEIYSLYVLQVPTFKPCLRIDHNDAFYMTEREKYQAIVAEIISAHRSGKPILIGTESVEVSEKLSRILRQNRINHTVLNAKNHAQEAEIIAGAGKVGAVTVATNMAGRGTDIKLDEEAVAAGGLYVIGTSRHQSRRIDRQLRGRCARLGDPGAAKFFLSFEDRLMRLFASPKLNTLIRHFRPPEGEAMSDPMFDRLIETAQKRVEGRNYTIRKHTLEYDDVMNKQRQTIYAFRNDVLHAEDLFVVAKEQIEHVALALAFLILKDAHADHCSLPKIEEWLSYSFPVKLDDQEIRRLGDVDAVADYIGDLLIEAFDVKFSAMLAEFTEIIGSAANAQGICNDILRSVIISHIDEEWKVHLVDMDLLRSEVGLRSVGQKDPLIEFKNESFLLFEGLIRDIRIAIVKHLFALELSLTRSDRPDNAIPTVATAFHNHDNFRPMELTIVGEEEES.

ATP-binding positions include glutamine 99, 117–121 (GEGKT), and aspartate 631.

This sequence belongs to the SecA family. Monomer and homodimer. Part of the essential Sec protein translocation apparatus which comprises SecA, SecYEG and auxiliary proteins SecDF. Other proteins may also be involved.

The protein resides in the cell inner membrane. Its subcellular location is the cytoplasm. The enzyme catalyses ATP + H2O + cellular proteinSide 1 = ADP + phosphate + cellular proteinSide 2.. In terms of biological role, part of the Sec protein translocase complex. Interacts with the SecYEG preprotein conducting channel. Has a central role in coupling the hydrolysis of ATP to the transfer of proteins into and across the cell membrane, serving as an ATP-driven molecular motor driving the stepwise translocation of polypeptide chains across the membrane. The chain is Protein translocase subunit SecA from Chlamydia trachomatis serovar A (strain ATCC VR-571B / DSM 19440 / HAR-13).